We begin with the raw amino-acid sequence, 356 residues long: Nucleotide-binding protein GDI1189/Gdia_1902 (356 aa).

20–27 provides a ligand contact to ATP; it reads GLSGAGKS. 65–68 serves as a coordination point for GTP; the sequence is DSRT. A disordered region spans residues 285–313; sequence EPGGTCDSPGKPAHIEKGAAPTDVQSGGA.

This sequence belongs to the RapZ-like family.

Its function is as follows. Displays ATPase and GTPase activities. The sequence is that of Nucleotide-binding protein GDI1189/Gdia_1902 from Gluconacetobacter diazotrophicus (strain ATCC 49037 / DSM 5601 / CCUG 37298 / CIP 103539 / LMG 7603 / PAl5).